Here is a 467-residue protein sequence, read N- to C-terminus: AT-rich interactive domain-containing protein cfi-1 (467 aa).

Residues 1 to 56 form a disordered region; it reads MSVRIDEPQLFVSMSKEPTQETVNVGGHHDDSSSNCDERVDDQTEEQKSPPASPDL. The segment covering 27–48 has biased composition (basic and acidic residues); it reads GHHDDSSSNCDERVDDQTEEQK. The 93-residue stretch at 181–273 folds into the ARID domain; the sequence is DVKRKEWLDD…YLYDYECEKE (93 aa). Residues 356-464 enclose the REKLES domain; that stretch reads AILEAHQRNL…GVLFALDETV (109 aa). A disordered region spans residues 383 to 441; sequence LTACSNGNGGNIHNSGRESTSSNDSDIPAKRPKLENDVKTNGASSMRISTKHSDNSKTS. Basic and acidic residues predominate over residues 409–420; sequence IPAKRPKLENDV. Polar residues predominate over residues 421–430; the sequence is KTNGASSMRI.

Present in IL2 and URA neurons, and in AVD and PVC interneurons. Present in muscles from head and pharynx (at protein level).

The protein localises to the nucleus. Transcription factor. Regulates neuronal subtype identity. Involved in motor neuron fate determination and maintenance, acting as a transcriptional repressor to counteract gene activation by transcription factor unc-3 in a subset of motor neurons. Probably acts by binding to specific promoter elements. Promotes differentiation of URA sensory neurons and prevents them from expressing male-specific CEM neuronal features. Promotes differentiation of AVD and PVC interneurons and their glutamate receptor expression. This chain is AT-rich interactive domain-containing protein cfi-1 (cfi-1), found in Caenorhabditis elegans.